The chain runs to 279 residues: Probable endonuclease 4 (279 aa).

Residues His67, His107, Glu144, Asp177, His180, His214, Asp227, His229, and Glu259 each contribute to the Zn(2+) site.

It belongs to the AP endonuclease 2 family. It depends on Zn(2+) as a cofactor.

The enzyme catalyses Endonucleolytic cleavage to 5'-phosphooligonucleotide end-products.. Endonuclease IV plays a role in DNA repair. It cleaves phosphodiester bonds at apurinic or apyrimidinic (AP) sites, generating a 3'-hydroxyl group and a 5'-terminal sugar phosphate. The chain is Probable endonuclease 4 from Sulfurihydrogenibium sp. (strain YO3AOP1).